The following is a 610-amino-acid chain: Atypical kinase COQ8, mitochondrial (610 aa).

Over residues 98-111 (GVKHLQEQSSKEIK) the composition is skewed to basic and acidic residues. Residues 98-144 (GVKHLQEQSSKEIKNPISQPILPNKKDEISPAKPSAIDSSIKDVTKS) form a disordered region.

Belongs to the protein kinase superfamily. ADCK protein kinase family.

It localises to the mitochondrion. It functions in the pathway cofactor biosynthesis; ubiquinone biosynthesis. Atypical kinase involved in the biosynthesis of coenzyme Q, also named ubiquinone, an essential lipid-soluble electron transporter for aerobic cellular respiration. Its substrate specificity is still unclear: may act as a protein kinase that mediates phosphorylation of coq3. According to other reports, acts as a small molecule kinase, possibly a lipid kinase that phosphorylates a prenyl lipid in the ubiquinone biosynthesis pathway, as suggested by its ability to bind coenzyme Q lipid intermediates. The sequence is that of Atypical kinase COQ8, mitochondrial from Schizosaccharomyces pombe (strain 972 / ATCC 24843) (Fission yeast).